The primary structure comprises 757 residues: Catalase-peroxidase (757 aa).

The segment at residues 101-248 (WHSAGTYRIG…LAAVQMGLIY (148 aa)) is a cross-link (tryptophyl-tyrosyl-methioninium (Trp-Tyr) (with M-274)). The Proton acceptor role is filled by H102. The tract at residues 213–232 (VHHPDEHRGAKEKASKNSDS) is disordered. Residues 248-274 (YVNPEGPDGCPDPLASARDIRETFARM) constitute a cross-link (tryptophyl-tyrosyl-methioninium (Tyr-Met) (with W-101)). A heme b-binding site is contributed by H289.

This sequence belongs to the peroxidase family. Peroxidase/catalase subfamily. As to quaternary structure, homodimer or homotetramer. Requires heme b as cofactor. In terms of processing, formation of the three residue Trp-Tyr-Met cross-link is important for the catalase, but not the peroxidase activity of the enzyme.

The catalysed reaction is H2O2 + AH2 = A + 2 H2O. The enzyme catalyses 2 H2O2 = O2 + 2 H2O. In terms of biological role, bifunctional enzyme with both catalase and broad-spectrum peroxidase activity. This chain is Catalase-peroxidase, found in Xylella fastidiosa (strain M23).